The sequence spans 113 residues: Beta-microseminoprotein (113 aa).

Positions 1-20 are cleaved as a signal peptide; that stretch reads MEAWLGSLLFLATMVIASKA. 5 disulfides stabilise this stretch: cysteine 22-cysteine 69, cysteine 38-cysteine 61, cysteine 56-cysteine 92, cysteine 59-cysteine 68, and cysteine 83-cysteine 106.

The protein belongs to the beta-microseminoprotein family. As to quaternary structure, homodimer; Interacts with PI16.

The protein localises to the secreted. The protein is Beta-microseminoprotein (Msmb) of Mus musculus (Mouse).